The following is a 193-amino-acid chain: NADH-quinone oxidoreductase subunit B (193 aa).

[4Fe-4S] cluster contacts are provided by C72, C73, C137, and C167.

The protein belongs to the complex I 20 kDa subunit family. As to quaternary structure, NDH-1 is composed of 14 different subunits. Subunits NuoB, C, D, E, F, and G constitute the peripheral sector of the complex. [4Fe-4S] cluster is required as a cofactor.

It is found in the cell inner membrane. The catalysed reaction is a quinone + NADH + 5 H(+)(in) = a quinol + NAD(+) + 4 H(+)(out). NDH-1 shuttles electrons from NADH, via FMN and iron-sulfur (Fe-S) centers, to quinones in the respiratory chain. The immediate electron acceptor for the enzyme in this species is believed to be ubiquinone. Couples the redox reaction to proton translocation (for every two electrons transferred, four hydrogen ions are translocated across the cytoplasmic membrane), and thus conserves the redox energy in a proton gradient. The chain is NADH-quinone oxidoreductase subunit B from Bartonella henselae (strain ATCC 49882 / DSM 28221 / CCUG 30454 / Houston 1) (Rochalimaea henselae).